Consider the following 848-residue polypeptide: Translation initiation factor IF-2 (848 aa).

The disordered stretch occupies residues 1 to 265 (MSDTDGKKPL…GNQRAEKQVR (265 aa)). A compositionally biased stretch (basic and acidic residues) spans 89–162 (KAREVEEAAQ…AEIAKPKTEA (74 aa)). The segment covering 163–179 (RPATPADRAAAEAAAVR) has biased composition (low complexity). A compositionally biased stretch (basic and acidic residues) spans 191–219 (RKTDRDRDTRGGGGDDRDSRNKGRDDSRR). The tr-type G domain occupies 346–514 (PRAPIITIMG…AIALQAEILE (169 aa)). The interval 355 to 362 (GHVDHGKT) is G1. 355 to 362 (GHVDHGKT) provides a ligand contact to GTP. The interval 380-384 (GITQH) is G2. The segment at 402-405 (DTPG) is G3. Residues 402–406 (DTPGH) and 456–459 (NKID) contribute to the GTP site. The interval 456–459 (NKID) is G4. Positions 492 to 494 (SAK) are G5.

It belongs to the TRAFAC class translation factor GTPase superfamily. Classic translation factor GTPase family. IF-2 subfamily.

It is found in the cytoplasm. Its function is as follows. One of the essential components for the initiation of protein synthesis. Protects formylmethionyl-tRNA from spontaneous hydrolysis and promotes its binding to the 30S ribosomal subunits. Also involved in the hydrolysis of GTP during the formation of the 70S ribosomal complex. The sequence is that of Translation initiation factor IF-2 from Paracoccus denitrificans (strain Pd 1222).